Consider the following 256-residue polypeptide: Small ribosomal subunit protein uS2 (256 aa).

It belongs to the universal ribosomal protein uS2 family.

The polypeptide is Small ribosomal subunit protein uS2 (Rhizobium rhizogenes (strain K84 / ATCC BAA-868) (Agrobacterium radiobacter)).